A 438-amino-acid chain; its full sequence is Putative ZDHHC-type palmitoyltransferase 7 (438 aa).

Residues Asn12 and Asn13 are each glycosylated (N-linked (GlcNAc...) asparagine). 2 helical membrane-spanning segments follow: residues 48 to 68 (IFCL…GTIL) and 77 to 97 (YFYL…YFLI). Asn119, Asn144, and Asn157 each carry an N-linked (GlcNAc...) asparagine glycan. Residues 183-239 (EDSINDDTITTTTTTTTTTSTSTIPEISNDDDDNNNENNNDNVNNRNNNNSNGEKED) are disordered. 2 stretches are compositionally biased toward low complexity: residues 190–206 (TITT…TSTI) and 218–234 (NENN…NNSN). Asn231 is a glycosylation site (N-linked (GlcNAc...) asparagine). The DHHC domain maps to 249-299 (YFCKKCLVDIPLRTKHCVKCNRCVLKYDHHCVFIGGCVGLNNHKNFLLFLL). The next 2 helical transmembrane spans lie at 294-314 (FLLF…IIVT) and 330-350 (IAII…FALF). N-linked (GlcNAc...) asparagine glycosylation is present at Asn360.

Belongs to the DHHC palmitoyltransferase family.

The protein resides in the membrane. The enzyme catalyses L-cysteinyl-[protein] + hexadecanoyl-CoA = S-hexadecanoyl-L-cysteinyl-[protein] + CoA. The sequence is that of Putative ZDHHC-type palmitoyltransferase 7 from Dictyostelium discoideum (Social amoeba).